We begin with the raw amino-acid sequence, 428 residues long: Glutamate-1-semialdehyde 2,1-aminomutase 1 (428 aa).

Position 268 is an N6-(pyridoxal phosphate)lysine (Lys-268).

Belongs to the class-III pyridoxal-phosphate-dependent aminotransferase family. HemL subfamily. Homodimer. Requires pyridoxal 5'-phosphate as cofactor.

It localises to the cytoplasm. The catalysed reaction is (S)-4-amino-5-oxopentanoate = 5-aminolevulinate. It functions in the pathway porphyrin-containing compound metabolism; protoporphyrin-IX biosynthesis; 5-aminolevulinate from L-glutamyl-tRNA(Glu): step 2/2. This is Glutamate-1-semialdehyde 2,1-aminomutase 1 from Geobacillus thermodenitrificans (strain NG80-2).